The chain runs to 466 residues: UDP-N-acetylmuramoylalanine--D-glutamate ligase (466 aa).

121-127 (GTNGKST) contributes to the ATP binding site.

Belongs to the MurCDEF family.

It is found in the cytoplasm. It catalyses the reaction UDP-N-acetyl-alpha-D-muramoyl-L-alanine + D-glutamate + ATP = UDP-N-acetyl-alpha-D-muramoyl-L-alanyl-D-glutamate + ADP + phosphate + H(+). It participates in cell wall biogenesis; peptidoglycan biosynthesis. Cell wall formation. Catalyzes the addition of glutamate to the nucleotide precursor UDP-N-acetylmuramoyl-L-alanine (UMA). The protein is UDP-N-acetylmuramoylalanine--D-glutamate ligase of Rhodopseudomonas palustris (strain HaA2).